A 461-amino-acid polypeptide reads, in one-letter code: MSVIKEYRTASEVVGPLMIVEQVNNVSYNELVEIQLHNGEIRRGQVLEIHEDKAMVQLFEGSSGINLEKSKIRFAGHALELAVSEDMVGRIFNGMGKPIDGGPDLIPEKYLDIDGQAINPVSRDYPDEFIQTGISSIDHLNTLVRGQKLPVFSGSGLPHNELAAQIARQATVLNSDENFAVVFAAMGITFEEAEFFMEELRKTGAIDRSVLFMNLANDPAIERIATPRIALTAAEYLAFEKDMHVLVIMTDMTNYCEALREVSAARREVPGRRGYPGYLYTNLSTLYERAGRLVGKKGSVTQIPILTMPEDDITHPIPDLTGYITEGQIILSHELYNQGYRPPINVLSSLSRLKDKGSGEGKTRGDHAPTMNQLFAAYAQGKKVEELAVVLGESALSDVDKLYVRFTKRFEEEYINQGFYKNRNIEDTLNLGWELLSILPRTELKRIKDDLLDKYLPLVEV.

The protein belongs to the ATPase alpha/beta chains family.

Its function is as follows. Produces ATP from ADP in the presence of a proton gradient across the membrane. The V-type beta chain is a regulatory subunit. This chain is V-type ATP synthase beta chain, found in Streptococcus pneumoniae (strain CGSP14).